A 475-amino-acid chain; its full sequence is Exodeoxyribonuclease 7 large subunit (475 aa).

This sequence belongs to the XseA family. Heterooligomer composed of large and small subunits.

The protein resides in the cytoplasm. The enzyme catalyses Exonucleolytic cleavage in either 5'- to 3'- or 3'- to 5'-direction to yield nucleoside 5'-phosphates.. In terms of biological role, bidirectionally degrades single-stranded DNA into large acid-insoluble oligonucleotides, which are then degraded further into small acid-soluble oligonucleotides. In Bartonella henselae (strain ATCC 49882 / DSM 28221 / CCUG 30454 / Houston 1) (Rochalimaea henselae), this protein is Exodeoxyribonuclease 7 large subunit.